A 265-amino-acid chain; its full sequence is Capsule polysaccharide export inner-membrane protein CtrC (265 aa).

6 consecutive transmembrane segments (helical) span residues 37-57 (IGFL…VLMW), 67-84 (TLNI…LMMW), 121-141 (IAGA…IGWI), 148-168 (FYML…GLVI), 178-198 (FGKI…AFFF), and 238-258 (WYIV…VSKF). An ABC transmembrane type-2 domain is found at 37–258 (IGFLWLFVEP…LFGLAMVSKF (222 aa)).

Belongs to the ABC-2 integral membrane protein family.

The protein resides in the cell inner membrane. Its function is as follows. May form an ATP-driven capsule polysaccharide export apparatus, in association with the CtrB and CtrD proteins. In Neisseria meningitidis serogroup B (strain ATCC BAA-335 / MC58), this protein is Capsule polysaccharide export inner-membrane protein CtrC (ctrC).